A 149-amino-acid polypeptide reads, in one-letter code: SsrA-binding protein (149 aa).

It belongs to the SmpB family.

Its subcellular location is the cytoplasm. Required for rescue of stalled ribosomes mediated by trans-translation. Binds to transfer-messenger RNA (tmRNA), required for stable association of tmRNA with ribosomes. tmRNA and SmpB together mimic tRNA shape, replacing the anticodon stem-loop with SmpB. tmRNA is encoded by the ssrA gene; the 2 termini fold to resemble tRNA(Ala) and it encodes a 'tag peptide', a short internal open reading frame. During trans-translation Ala-aminoacylated tmRNA acts like a tRNA, entering the A-site of stalled ribosomes, displacing the stalled mRNA. The ribosome then switches to translate the ORF on the tmRNA; the nascent peptide is terminated with the 'tag peptide' encoded by the tmRNA and targeted for degradation. The ribosome is freed to recommence translation, which seems to be the essential function of trans-translation. The sequence is that of SsrA-binding protein from Acholeplasma laidlawii (strain PG-8A).